The chain runs to 256 residues: Stanniocalcin (256 aa).

The N-terminal stretch at Met-1–Ala-18 is a signal peptide. The propeptide occupies Thr-19–Arg-33. Asn-62 carries an N-linked (GlcNAc...) asparagine glycan. Positions Gln-204–Leu-241 are disordered.

Belongs to the stanniocalcin family. Homodimer; disulfide-linked. Produced and secreted by the corpuscles of Stannius.

It localises to the secreted. Functionally, its primary function is the prevention of hypercalcemia. Upon release into the circulation, it lowers calcium transport by the gills, thereby reducing its rate of influx from the environment into the extracellular compartment. STC also stimulates phosphate reabsorption by renal proximal tubules. The consequence of this action is increased levels of plasma phosphate, which combines with excess calcium and promotes its disposal into bone and scales. In Oncorhynchus mykiss (Rainbow trout), this protein is Stanniocalcin (stc).